Here is a 216-residue protein sequence, read N- to C-terminus: uncharacterized protein (216 aa).

A 4Fe-4S ferredoxin-type domain is found at 18–47; it reads PPDSPIEDRCGSCNICVDSCPTGALVQGGQ. The [4Fe-4S] cluster site is built by cysteine 27, cysteine 30, cysteine 33, cysteine 37, cysteine 79, cysteine 82, and cysteine 86.

This is an uncharacterized protein from Geobacillus stearothermophilus (Bacillus stearothermophilus).